A 357-amino-acid chain; its full sequence is Putative ankyrin repeat protein L42 (357 aa).

ANK repeat units follow at residues 34–63 (SCKQ…NLKF), 86–115 (EQNE…DFRM), 116–145 (NDDE…NIRA), 147–175 (NNRP…SFVS), 176–205 (KQNE…DINV), 206–235 (GKIP…SINK), 237–265 (SVDS…EVNI), 267–294 (YYAF…ITKD), and 301–331 (NTRY…DKDK).

This chain is Putative ankyrin repeat protein L42, found in Acanthamoeba polyphaga (Amoeba).